We begin with the raw amino-acid sequence, 327 residues long: Biotin synthase (327 aa).

One can recognise a Radical SAM core domain in the interval asparagine 42–serine 268. [4Fe-4S] cluster-binding residues include cysteine 57, cysteine 61, and cysteine 64. Residues cysteine 102, cysteine 134, cysteine 194, and arginine 266 each contribute to the [2Fe-2S] cluster site.

Belongs to the radical SAM superfamily. Biotin synthase family. Homodimer. Requires [4Fe-4S] cluster as cofactor. [2Fe-2S] cluster is required as a cofactor.

The catalysed reaction is (4R,5S)-dethiobiotin + (sulfur carrier)-SH + 2 reduced [2Fe-2S]-[ferredoxin] + 2 S-adenosyl-L-methionine = (sulfur carrier)-H + biotin + 2 5'-deoxyadenosine + 2 L-methionine + 2 oxidized [2Fe-2S]-[ferredoxin]. The protein operates within cofactor biosynthesis; biotin biosynthesis; biotin from 7,8-diaminononanoate: step 2/2. Its function is as follows. Catalyzes the conversion of dethiobiotin (DTB) to biotin by the insertion of a sulfur atom into dethiobiotin via a radical-based mechanism. The sequence is that of Biotin synthase from Rhizobium rhizogenes (strain K84 / ATCC BAA-868) (Agrobacterium radiobacter).